The chain runs to 124 residues: Small ribosomal subunit protein uS12 (124 aa).

Asp-89 is modified (3-methylthioaspartic acid). Residues 104–124 (SAGVQNRNRGRSKYGTKRPKK) form a disordered region. Residues 111-124 (NRGRSKYGTKRPKK) show a composition bias toward basic residues.

The protein belongs to the universal ribosomal protein uS12 family. As to quaternary structure, part of the 30S ribosomal subunit. Contacts proteins S8 and S17. May interact with IF1 in the 30S initiation complex.

With S4 and S5 plays an important role in translational accuracy. Functionally, interacts with and stabilizes bases of the 16S rRNA that are involved in tRNA selection in the A site and with the mRNA backbone. Located at the interface of the 30S and 50S subunits, it traverses the body of the 30S subunit contacting proteins on the other side and probably holding the rRNA structure together. The combined cluster of proteins S8, S12 and S17 appears to hold together the shoulder and platform of the 30S subunit. The protein is Small ribosomal subunit protein uS12 of Pelotomaculum thermopropionicum (strain DSM 13744 / JCM 10971 / SI).